Consider the following 269-residue polypeptide: uncharacterized protein (269 aa).

The segment at 1-21 (MAYSSSNSDIEDDSSKSNSNL) is disordered.

This is an uncharacterized protein from Homo sapiens (Human).